The primary structure comprises 344 residues: Phosphoserine phosphatase (344 aa).

In terms of domain architecture, ACT spans 48-120; that stretch reads VVTILGKDRV…ERLGLDIVMQ (73 aa). Aspartate 135 functions as the Nucleophile in the catalytic mechanism. Aspartate 135 and aspartate 137 together coordinate Mg(2+). Aspartate 137 acts as the Proton donor in catalysis. Substrate is bound by residues glutamate 144, arginine 180, 223-224, and lysine 268; that span reads SG. Aspartate 291 contributes to the Mg(2+) binding site.

The protein belongs to the HAD-like hydrolase superfamily. SerB family. Mg(2+) is required as a cofactor.

It catalyses the reaction O-phospho-L-serine + H2O = L-serine + phosphate. The enzyme catalyses O-phospho-D-serine + H2O = D-serine + phosphate. It participates in amino-acid biosynthesis; L-serine biosynthesis; L-serine from 3-phospho-D-glycerate: step 3/3. This is Phosphoserine phosphatase from Archaeoglobus fulgidus (strain ATCC 49558 / DSM 4304 / JCM 9628 / NBRC 100126 / VC-16).